The chain runs to 380 residues: MTHSPIQYRLIKKEKHTGARLGEIITPHGVFPTPMFMPVGTQATVKTQSPEELKEMKAGIILANTYHLWLRPGDDLVARAGGLHKFMNWDQPILTDSGGFQVYSLAEKRNITEEGVTFKNHLNGARMFLTPEKAISIQNNLGSDIMMSFDECPQFYQPYDYVKASIERTSRWAERGLKAHRRPQDQGLFGIVQGAGFEDLRRQSTADLVSMDFPGYSIGGLAVGESHEEMNAVLDFTTPLLPENKPRYLMGVGAPDSLIDGVIRGVDMFDCVLPTRIARNGTCMTSRGRLVVKNAQYAEDFTPLDHDCDCYTCQNYTRAYIRHLIKADETFGLRLTSYHNLYFLLNLMEKIRQAIMDDNILEFREDFIEKYGYGRSERNF.

The active-site Proton acceptor is the aspartate 96. Residues aspartate 96–phenylalanine 100, aspartate 150, glutamine 193, and glycine 220 each bind substrate. Positions glycine 251–serine 257 are RNA binding. Aspartate 270 (nucleophile) is an active-site residue. The tract at residues threonine 275–arginine 279 is RNA binding; important for wobble base 34 recognition. Residues cysteine 308, cysteine 310, cysteine 313, and histidine 339 each contribute to the Zn(2+) site.

The protein belongs to the queuine tRNA-ribosyltransferase family. As to quaternary structure, homodimer. Within each dimer, one monomer is responsible for RNA recognition and catalysis, while the other monomer binds to the replacement base PreQ1. It depends on Zn(2+) as a cofactor.

It carries out the reaction 7-aminomethyl-7-carbaguanine + guanosine(34) in tRNA = 7-aminomethyl-7-carbaguanosine(34) in tRNA + guanine. The protein operates within tRNA modification; tRNA-queuosine biosynthesis. Its function is as follows. Catalyzes the base-exchange of a guanine (G) residue with the queuine precursor 7-aminomethyl-7-deazaguanine (PreQ1) at position 34 (anticodon wobble position) in tRNAs with GU(N) anticodons (tRNA-Asp, -Asn, -His and -Tyr). Catalysis occurs through a double-displacement mechanism. The nucleophile active site attacks the C1' of nucleotide 34 to detach the guanine base from the RNA, forming a covalent enzyme-RNA intermediate. The proton acceptor active site deprotonates the incoming PreQ1, allowing a nucleophilic attack on the C1' of the ribose to form the product. After dissociation, two additional enzymatic reactions on the tRNA convert PreQ1 to queuine (Q), resulting in the hypermodified nucleoside queuosine (7-(((4,5-cis-dihydroxy-2-cyclopenten-1-yl)amino)methyl)-7-deazaguanosine). The sequence is that of Queuine tRNA-ribosyltransferase from Streptococcus mutans serotype c (strain ATCC 700610 / UA159).